We begin with the raw amino-acid sequence, 710 residues long: Ent-copalyl diphosphate synthase 1 (710 aa).

Lysine 145 is a substrate binding site. Mg(2+) is bound by residues aspartate 277 and aspartate 279. The DXDD motif signature appears at 277 to 280; the sequence is DIDD. Lysine 364 provides a ligand contact to substrate.

The protein belongs to the terpene synthase family. Tpsc subfamily. Mg(2+) is required as a cofactor. Expressed in germinating seeds and leaves.

It catalyses the reaction (2E,6E,10E)-geranylgeranyl diphosphate = ent-copalyl diphosphate. It participates in plant hormone biosynthesis; gibberellin biosynthesis. It functions in the pathway secondary metabolite biosynthesis; terpenoid biosynthesis. Involved in the biosynthesis of ent-kaurene diterpenoids natural products such as oridonin, miltiradiene, eriocalyxin B and nezukol, known to exhibit antitumor, anti-inflammatory and antibacterial activities, and in the production of gibberellins phytohormones. Catalyzes the conversion of (2E,6E,10E)-geranylgeranyl diphosphate (GGPP) to ent-copalyl diphosphate (ent-CPP). In Isodon eriocalyx (Plectranthus eriocalyx), this protein is Ent-copalyl diphosphate synthase 1.